The chain runs to 262 residues: Phosphatidylserine decarboxylase proenzyme (262 aa).

Catalysis depends on charge relay system; for autoendoproteolytic cleavage activity residues D86, H142, and S226. The Schiff-base intermediate with substrate; via pyruvic acid; for decarboxylase activity role is filled by S226. The residue at position 226 (S226) is a Pyruvic acid (Ser); by autocatalysis.

This sequence belongs to the phosphatidylserine decarboxylase family. PSD-B subfamily. Prokaryotic type I sub-subfamily. As to quaternary structure, heterodimer of a large membrane-associated beta subunit and a small pyruvoyl-containing alpha subunit. Requires pyruvate as cofactor. In terms of processing, is synthesized initially as an inactive proenzyme. Formation of the active enzyme involves a self-maturation process in which the active site pyruvoyl group is generated from an internal serine residue via an autocatalytic post-translational modification. Two non-identical subunits are generated from the proenzyme in this reaction, and the pyruvate is formed at the N-terminus of the alpha chain, which is derived from the carboxyl end of the proenzyme. The autoendoproteolytic cleavage occurs by a canonical serine protease mechanism, in which the side chain hydroxyl group of the serine supplies its oxygen atom to form the C-terminus of the beta chain, while the remainder of the serine residue undergoes an oxidative deamination to produce ammonia and the pyruvoyl prosthetic group on the alpha chain. During this reaction, the Ser that is part of the protease active site of the proenzyme becomes the pyruvoyl prosthetic group, which constitutes an essential element of the active site of the mature decarboxylase.

The protein localises to the cell membrane. It carries out the reaction a 1,2-diacyl-sn-glycero-3-phospho-L-serine + H(+) = a 1,2-diacyl-sn-glycero-3-phosphoethanolamine + CO2. Its pathway is phospholipid metabolism; phosphatidylethanolamine biosynthesis; phosphatidylethanolamine from CDP-diacylglycerol: step 2/2. In terms of biological role, catalyzes the formation of phosphatidylethanolamine (PtdEtn) from phosphatidylserine (PtdSer). The protein is Phosphatidylserine decarboxylase proenzyme of Bacillus thuringiensis (strain Al Hakam).